Reading from the N-terminus, the 48-residue chain is SPbeta prophage-derived uncharacterized protein YotE (48 aa).

This chain is SPbeta prophage-derived uncharacterized protein YotE (yotE), found in Bacillus subtilis (strain 168).